Consider the following 84-residue polypeptide: Large ribosomal subunit protein bL27 (84 aa).

A disordered region spans residues 1-22 (MAHKKAGGSTRNGRDSESKRLG).

Belongs to the bacterial ribosomal protein bL27 family.

In Shewanella denitrificans (strain OS217 / ATCC BAA-1090 / DSM 15013), this protein is Large ribosomal subunit protein bL27.